The following is a 638-amino-acid chain: MSLATRRFGAAAALLVAACVLCTAPAWAQNETTGTGMVKTKSAFRWIRPPPARPPPFRRPPPAQTPYVHKVEYTELQILCPQTIDSVTGYPMDDPRCNVPRATVAAGEEALTIRNEFELLNGDVLNVTLEEVDTPENPSRRRLLSIIREEQRTGRVLLATSAELPTPTFRLKSLKSILKGSQKEIYAGKPIDLRTIVYIMDFSSCKLSGWSAPATLTPEKVTSDMLRGASAPTNNLANYYGACSYEKTLFNPDNFLVLGPVPVPCIGGVTPPPRPPRPPRPPPRAGSTISSLSRRNDTYDDWWDLSKYCTASEQQAWERAAEAYAQAIVAQDPNSATGKKLQGILQWRERRRNIYILPPGVKCSWSGYADVTCTSATCSAYVRGYSDTNAMQVIMHEAMHNYGLEHAGRGTLEYGDATDVMGDFNKAGKGLLCPNAPNMYRIGWAKPINEPGVAPFQNATGAWGNLTAANFTTDPWIRGLVIPAQGTRDDNMIVVNVGAQSTRDGAMKATGAQAYYFSYRIKNTTAGGYDSGLTLDFHKKVLVHAYNGIQSERVFGFKSNLLDWGPNFQSRSNTWTSPFLAYNNGLGGGVRLVVQSTSDTQAVVDICRISENGKELSCDDGIDNDCDGLQDNEDPDCQ.

Residues 1-28 (MSLATRRFGAAAALLVAACVLCTAPAWA) form the signal peptide. The propeptide at 29–183 (QNETTGTGMV…LKSILKGSQK (155 aa)) is activation peptide. An N-linked (GlcNAc...) asparagine glycan is attached at N30. The short motif at 95 to 102 (PRCNVPRA) is the Cysteine switch element. Position 97 (C97) interacts with Zn(2+). The N-linked (GlcNAc...) asparagine glycan is linked to N126. Residues 269–292 (VTPPPRPPRPPRPPPRAGSTISSL) form a disordered region. Residues 270–284 (TPPPRPPRPPRPPPR) are compositionally biased toward pro residues. A glycan (N-linked (GlcNAc...) asparagine) is linked at N296. H396 is a binding site for Zn(2+). E397 is a catalytic residue. Zn(2+)-binding residues include H400 and H406. Residues N458, N465, N470, and N523 are each glycosylated (N-linked (GlcNAc...) asparagine).

This sequence belongs to the peptidase M11 family. It depends on Zn(2+) as a cofactor. In terms of processing, present in 2 forms: an inactive V-form in vegetative cells and an active and soluble G-form. The V-form enzyme may be converted to the G-form enzyme during gametic differentiation under nitrogen-starved conditions.

It localises to the periplasm. The protein resides in the secreted. Its subcellular location is the cell wall. The catalysed reaction is Cleavage of the proline- and hydroxyproline-rich proteins of the Chlamydomonas cell wall. Also cleaves azocasein, gelatin and Leu-Trp-Met-|-Arg-Phe-Ala.. In terms of biological role, mediates digestion of the cell walls of the 2 mating type gametes during mating as a necessary prelude to cell fusion. This enzyme acts specifically on the framework proteins (inner wall) of the cell wall, cleaving several model peptides at specific sites. This Chlamydomonas reinhardtii (Chlamydomonas smithii) protein is Autolysin.